A 491-amino-acid chain; its full sequence is MANYFNTLNLRQQLSQLGKCRFMSRDEFADEANYLKGKKVVIVGCGAQGLNQGLNMRDSGLDIAYALRQEAIDEKRASWRRATENGFEVGTYEALIPQADLVVNLTPDKQHSAVVQAVQPLMKSGAALGYSHGFNIVEVGEKIRDDITVVMVAPKCPGTEVREEYKRGFGVPTLIAVHPENDAKGEGMAIAKAWAAATGGHRAGVLESSFVAEVKSDLMGEQTILCGMLQAGSLLCYDKMVAEGVEPGYAGKLIQFGWETITEALKQGGITLMMDRLSNPAKMRAYALSEQLKEIMAPLFAKHMDDIISGKFSETMMADWANDDKNLLTWREETGASAFENYPEYEGKISEQEYFDHGVLMVAMVKAGVELAFDTMIEAGIIAESAYYESLHELPLIANTIARKRLYEMNVVISDTAEYGNYLFSFAAVPMLKEFMTTLQSGDLAKHVPDSGTDNAQLRDINEAIRQHPIEIVGKKLRGYMTDMKKIAVAN.

In terms of domain architecture, KARI N-terminal Rossmann spans 17-208 (LGKCRFMSRD…GGHRAGVLES (192 aa)). NADP(+)-binding positions include 45-48 (CGAQ), Arg68, Arg76, Ser78, and 108-110 (DKQ). Residue His132 is part of the active site. Gly158 contacts NADP(+). KARI C-terminal knotted domains lie at 209–344 (SFVA…NYPE) and 345–484 (YEGK…MTDM). Positions 217, 221, 389, and 393 each coordinate Mg(2+). Ser414 serves as a coordination point for substrate.

The protein belongs to the ketol-acid reductoisomerase family. Mg(2+) is required as a cofactor.

The catalysed reaction is (2R)-2,3-dihydroxy-3-methylbutanoate + NADP(+) = (2S)-2-acetolactate + NADPH + H(+). It catalyses the reaction (2R,3R)-2,3-dihydroxy-3-methylpentanoate + NADP(+) = (S)-2-ethyl-2-hydroxy-3-oxobutanoate + NADPH + H(+). It functions in the pathway amino-acid biosynthesis; L-isoleucine biosynthesis; L-isoleucine from 2-oxobutanoate: step 2/4. The protein operates within amino-acid biosynthesis; L-valine biosynthesis; L-valine from pyruvate: step 2/4. Involved in the biosynthesis of branched-chain amino acids (BCAA). Catalyzes an alkyl-migration followed by a ketol-acid reduction of (S)-2-acetolactate (S2AL) to yield (R)-2,3-dihydroxy-isovalerate. In the isomerase reaction, S2AL is rearranged via a Mg-dependent methyl migration to produce 3-hydroxy-3-methyl-2-ketobutyrate (HMKB). In the reductase reaction, this 2-ketoacid undergoes a metal-dependent reduction by NADPH to yield (R)-2,3-dihydroxy-isovalerate. The polypeptide is Ketol-acid reductoisomerase (NADP(+)) (Proteus mirabilis (strain HI4320)).